Here is a 286-residue protein sequence, read N- to C-terminus: uncharacterized protein (286 aa).

Helical transmembrane passes span 201–221 and 231–251; these read VIYS…LCET and AIIL…YLMM.

Its subcellular location is the cell membrane. This is an uncharacterized protein from Methanocaldococcus jannaschii (strain ATCC 43067 / DSM 2661 / JAL-1 / JCM 10045 / NBRC 100440) (Methanococcus jannaschii).